The sequence spans 316 residues: MANLFDQLKEFTTIVADTGDVEAIKSVKPYDATTNPSLLLKASTLPQYAPLIDEAIAYAKSQSGDKAQQIEDAADKLAVLIGQEILKHIPGKISTEVDARLSFDTDAMVQKGRKLIKLYADAGISKDRVLIKLASTWEGIKAGEILEKEGINCNLTLLFSFAQARACAEAGVFLISPFVGRILDWYKAKTGENYTSETDPGVLSVRKIYAYYKEHGYKTVVMGASFRNTGEITALAGCDRLTVSPNLLERAEGYRRYLPRVLVDNGATKQRPALLTEKEFRFDQNEDAMATEKLAEGIRGFVVDQNKLEKALAEKL.

Lysine 132 serves as the catalytic Schiff-base intermediate with substrate.

This sequence belongs to the transaldolase family. Type 1 subfamily.

It localises to the cytoplasm. The catalysed reaction is D-sedoheptulose 7-phosphate + D-glyceraldehyde 3-phosphate = D-erythrose 4-phosphate + beta-D-fructose 6-phosphate. Its pathway is carbohydrate degradation; pentose phosphate pathway; D-glyceraldehyde 3-phosphate and beta-D-fructose 6-phosphate from D-ribose 5-phosphate and D-xylulose 5-phosphate (non-oxidative stage): step 2/3. Transaldolase is important for the balance of metabolites in the pentose-phosphate pathway. In Methylomonas aminofaciens, this protein is Transaldolase.